The primary structure comprises 469 residues: 2-amino-4-ketopentanoate thiolase beta subunit (469 aa).

Position 102 is an N6-(pyridoxal phosphate)lysine (K102). Residues N128 and 238 to 242 (AGGGN) contribute to the pyridoxal 5'-phosphate site.

The protein belongs to the threonine synthase family. In terms of assembly, heterodimer with OrtA. Pyridoxal 5'-phosphate serves as cofactor.

It carries out the reaction D-alanine + acetyl-CoA = (2R)-2-amino-4-oxopentanoate + CoA. Its activity is regulated as follows. Completely inhibited by p-chloromercuribenzoate (p-ClHgBzO) and acetyl-CoA, and partially inhibited by N-ethylmaleimide. In terms of biological role, involved in the ornithine fermentation pathway. Catalyzes the thiolytic cleavage of 2-amino-4-ketopentanoate (AKP) with coenzyme A (CoA) to form acetyl-CoA and alanine. It is strictly specific for AKP. The protein is 2-amino-4-ketopentanoate thiolase beta subunit of Acetoanaerobium sticklandii (strain ATCC 12662 / DSM 519 / JCM 1433 / CCUG 9281 / NCIMB 10654 / HF) (Clostridium sticklandii).